We begin with the raw amino-acid sequence, 398 residues long: Cap-specific mRNA (nucleoside-2'-O-)-methyltransferase 1 (398 aa).

The region spanning 85–298 (QFSNRAGHKL…ERYLVCVDFL (214 aa)) is the RrmJ-type SAM-dependent 2'-O-MTase domain. Residues Gly-132 and Asp-211 each coordinate S-adenosyl-L-methionine. The active-site Proton acceptor is Lys-252. Residues 371–398 (LKAKETTTRTSAESDDSPLSSRESCKDG) are disordered.

It catalyses the reaction a 5'-end (N(7)-methyl 5'-triphosphoguanosine)-ribonucleoside in mRNA + S-adenosyl-L-methionine = a 5'-end (N(7)-methyl 5'-triphosphoguanosine)-(2'-O-methyl-ribonucleoside) in mRNA + S-adenosyl-L-homocysteine + H(+). Its function is as follows. S-adenosyl-L-methionine-dependent methyltransferase that mediates RNA cap1 2'-O-ribose methylation to the 5'-cap structure of RNAs. Methylates the ribose of the first nucleotide of a m(7)GpppG-capped mRNA to produce m(7)GpppNmp (cap1). This Leishmania braziliensis protein is Cap-specific mRNA (nucleoside-2'-O-)-methyltransferase 1.